Consider the following 462-residue polypeptide: L-seryl-tRNA(Sec) selenium transferase (462 aa).

Lys-293 is subject to N6-(pyridoxal phosphate)lysine.

It belongs to the SelA family. Pyridoxal 5'-phosphate serves as cofactor.

Its subcellular location is the cytoplasm. It carries out the reaction L-seryl-tRNA(Sec) + selenophosphate + H(+) = L-selenocysteinyl-tRNA(Sec) + phosphate. It participates in aminoacyl-tRNA biosynthesis; selenocysteinyl-tRNA(Sec) biosynthesis; selenocysteinyl-tRNA(Sec) from L-seryl-tRNA(Sec) (bacterial route): step 1/1. Converts seryl-tRNA(Sec) to selenocysteinyl-tRNA(Sec) required for selenoprotein biosynthesis. The chain is L-seryl-tRNA(Sec) selenium transferase from Clostridium botulinum (strain 657 / Type Ba4).